A 744-amino-acid chain; its full sequence is MVRPGLSAAAEERQRKLQEYLAAKGKLKCQNTKPYLKAKNNCPNPPHSKSTIGPKKDVTNHVALPVKTTRSINIKLQSRPANITRSQRPKLEPPKLGKRLTSESVSSNPNGKPPGNSQQLRGFGSSTDGKQPRKTMGSLNVQKLKTTKQQVTDQRTAKGTDPVDNTHVENESLGGCLKEMNKENLPQDLPNSERKPNPESWTINKPQTNQTKSSLASTREVLDKSSVNSAALKEGVIKPFVEETQISVPPGKSQKLSRVADLIRPGGKPPKTLPSHFVQTLNRTQATKKTVVKDIKSIKVNRSKYERPNEAKLQSYTVTEQKVKHSKPSTHPSVLQGGCNHRHPNIKQDHKPTQACCRPQTSYALQKSKAISQRPNLTVGSFNSVIPSTPSIRANGATGNKCNNSCQQRARTLDSKFKSAPPQKCFLNKTAPRTQAGGPTISGRGVPNGAQTNPCKKIAAEDRRKQLEEWRKSKGKIYKRPPMELKTKRKIIEEMNISFWKSMEKEEEEKKAQLELSNKINNTLTECLQLIERGVLSNEVFAILSSIPEAEKFAKFWICKAKLLASKGTFDVIGLYEEAIRNGATPIQELREVVLNILQDRNRTTEGMTSNSLVAETNITSIEELAKKTESGASCLSPKESEQMSVTPQITKSEQDGHPGIKLQIAPIPRINGMPEVQDMKLITPVRRSARIERAVSRYPEMLQEHDLVVASLNELLEVEETECFIFRKNEALPVTLGFPVSES.

5 disordered regions span residues 35–56 (YLKAKNNCPNPPHSKSTIGPKK), 76–169 (LQSR…THVE), 182–216 (KENLPQDLPNSERKPNPESWTINKPQTNQTKSSLA), 317–337 (TVTEQKVKHSKPSTHPSVLQG), and 428–452 (NKTAPRTQAGGPTISGRGVPNGAQT). Composition is skewed to polar residues over residues 76 to 86 (LQSRPANITRS), 102 to 129 (SESVSSNPNGKPPGNSQQLRGFGSSTDG), and 137 to 154 (GSLNVQKLKTTKQQVTDQ). Lys195 participates in a covalent cross-link: Glycyl lysine isopeptide (Lys-Gly) (interchain with G-Cter in SUMO1); alternate. Lys195 participates in a covalent cross-link: Glycyl lysine isopeptide (Lys-Gly) (interchain with G-Cter in SUMO2); alternate. Over residues 199–216 (ESWTINKPQTNQTKSSLA) the composition is skewed to polar residues. Position 744 is a phosphoserine (Ser744).

Belongs to the CKAP2 family. Ubiquitinated by the anaphase promoting complex/cyclosome (APC/C).

The protein localises to the cytoplasm. The protein resides in the cytoskeleton. It localises to the spindle pole. Functionally, microtubule-associated protein required for mitotic spindle formation and cell-cycle progression in neural progenitor cells. The chain is Cytoskeleton-associated protein 2-like (CKAP2L) from Bos taurus (Bovine).